A 377-amino-acid chain; its full sequence is 2-aminoethylphosphonate--pyruvate transaminase (377 aa).

Lys-194 carries the post-translational modification N6-(pyridoxal phosphate)lysine.

It belongs to the class-V pyridoxal-phosphate-dependent aminotransferase family. PhnW subfamily. Homodimer. The cofactor is pyridoxal 5'-phosphate.

It catalyses the reaction (2-aminoethyl)phosphonate + pyruvate = phosphonoacetaldehyde + L-alanine. In terms of biological role, involved in phosphonate degradation. The protein is 2-aminoethylphosphonate--pyruvate transaminase of Cupriavidus taiwanensis (strain DSM 17343 / BCRC 17206 / CCUG 44338 / CIP 107171 / LMG 19424 / R1) (Ralstonia taiwanensis (strain LMG 19424)).